The sequence spans 1325 residues: Nucleoporin nup146 (1325 aa).

Disordered regions lie at residues 1 to 20 (MNAENTFSILNTNEPNAGGS), 453 to 474 (VRASNNENIPTPDKQASPFVKN), 758 to 951 (GEGL…PKIH), and 973 to 994 (FPKQPLVVQSTDKNKKEPQESL). Positions 763 to 778 (QQKTSKALPSTGITKL) are enriched in polar residues. Basic and acidic residues predominate over residues 779–791 (SENDNEKAEESNE). Polar residues predominate over residues 792–801 (TKGFNTTIAK). A compositionally biased stretch (basic and acidic residues) spans 802–811 (QNDKSSKSEG). 2 stretches are compositionally biased toward polar residues: residues 816-835 (ANMSALNKSTNNETSDSKPS) and 850-861 (FTFNKPSETPPF). Residues 867 to 881 (LVEKESKQDVSDTSD) show a composition bias toward basic and acidic residues. A Phosphothreonine modification is found at Thr899. Residues 927–937 (SEIEDQDEESS) are compositionally biased toward acidic residues. Thr946 bears the Phosphothreonine mark. Residues Ser1041, Ser1043, and Ser1044 each carry the phosphoserine modification.

The protein localises to the cytoplasm. It localises to the nucleus. Functionally, functions as a component of the nuclear pore complex (NPC). NPC components, collectively referred to as nucleoporins (NUPs), can play the role of both NPC structural components and of docking or interaction partners for transiently associated nuclear transport factors. Active directional transport is assured by both, a Phe-Gly (FG) repeat affinity gradient for these transport factors across the NPC and a transport cofactor concentration gradient across the nuclear envelope. The polypeptide is Nucleoporin nup146 (nup146) (Schizosaccharomyces pombe (strain 972 / ATCC 24843) (Fission yeast)).